We begin with the raw amino-acid sequence, 294 residues long: 4-hydroxy-tetrahydrodipicolinate synthase (294 aa).

Pyruvate is bound at residue Thr-47. The active-site Proton donor/acceptor is Tyr-135. Lys-164 serves as the catalytic Schiff-base intermediate with substrate. A pyruvate-binding site is contributed by Val-206.

This sequence belongs to the DapA family. In terms of assembly, homotetramer; dimer of dimers.

It is found in the cytoplasm. It catalyses the reaction L-aspartate 4-semialdehyde + pyruvate = (2S,4S)-4-hydroxy-2,3,4,5-tetrahydrodipicolinate + H2O + H(+). It participates in amino-acid biosynthesis; L-lysine biosynthesis via DAP pathway; (S)-tetrahydrodipicolinate from L-aspartate: step 3/4. Catalyzes the condensation of (S)-aspartate-beta-semialdehyde [(S)-ASA] and pyruvate to 4-hydroxy-tetrahydrodipicolinate (HTPA). This chain is 4-hydroxy-tetrahydrodipicolinate synthase, found in Lachnoclostridium phytofermentans (strain ATCC 700394 / DSM 18823 / ISDg) (Clostridium phytofermentans).